Consider the following 362-residue polypeptide: uncharacterized protein (362 aa).

A helical membrane pass occupies residues 13-33; it reads VLILSVGLNMLFLLLFYSAIF. Positions 314–357 constitute a LysM domain; sequence EEYVVQDGDSLWLIAKRFGIPMDKIIQKNGLNHHRLFPGKVLKL.

It belongs to the chlamydial CPn_0593/CT_474/TC_0759 family.

Its subcellular location is the membrane. This is an uncharacterized protein from Chlamydia pneumoniae (Chlamydophila pneumoniae).